The chain runs to 102 residues: Cytochrome c oxidase subunit 6a, mitochondrial (102 aa).

Residues 1-36 (MATAIVRSALSRAVTRAAPKTSVAPKRNFSSSAGHD) constitute a mitochondrion transit peptide.

It belongs to the cytochrome c oxidase subunit 6A (TC 3.D.4.11) family.

The protein resides in the mitochondrion inner membrane. Its function is as follows. This protein is one of the nuclear-coded polypeptide chains of cytochrome c oxidase, the terminal oxidase in mitochondrial electron transport. The protein is Cytochrome c oxidase subunit 6a, mitochondrial (COX6A) of Arabidopsis thaliana (Mouse-ear cress).